A 295-amino-acid polypeptide reads, in one-letter code: Protease HtpX (295 aa).

2 consecutive transmembrane segments (helical) span residues 4-24 and 42-62; these read ILLF…TLSL and QLLV…LFIS. His147 lines the Zn(2+) pocket. Residue Glu148 is part of the active site. His151 contributes to the Zn(2+) binding site. 2 consecutive transmembrane segments (helical) span residues 158 to 178 and 199 to 219; these read VTLA…ARII and ITTI…VMWF. Residue Glu224 participates in Zn(2+) binding.

It belongs to the peptidase M48B family. Zn(2+) serves as cofactor.

The protein localises to the cell inner membrane. The protein is Protease HtpX of Pseudomonas savastanoi pv. phaseolicola (strain 1448A / Race 6) (Pseudomonas syringae pv. phaseolicola (strain 1448A / Race 6)).